A 130-amino-acid chain; its full sequence is Follitropin subunit beta (130 aa).

The signal sequence occupies residues 1 to 20 (MMKSIQLCILLWCLRAVCCH). 6 cysteine pairs are disulfide-bonded: Cys-22–Cys-70, Cys-36–Cys-85, Cys-39–Cys-123, Cys-47–Cys-101, Cys-51–Cys-103, and Cys-106–Cys-113. N-linked (GlcNAc...) asparagine glycosylation is found at Asn-26 and Asn-43.

Belongs to the glycoprotein hormones subunit beta family. Heterodimer. The active follitropin is a heterodimer composed of an alpha chain/CGA shared with other hormones and a unique beta chain/FSHB shown here.

The protein localises to the secreted. Together with the alpha chain CGA constitutes follitropin, the follicle-stimulating hormone, and provides its biological specificity to the hormone heterodimer. Binds FSHR, a G protein-coupled receptor, on target cells to activate downstream signaling pathways. Follitropin is involved in follicle development and spermatogenesis in reproductive organs. In Rattus norvegicus (Rat), this protein is Follitropin subunit beta (Fshb).